The primary structure comprises 549 residues: Polynucleotide 5'-hydroxyl-kinase nol-9 (549 aa).

ATP is bound at residue 190 to 197 (GHKGAGKS).

The protein belongs to the Clp1 family. NOL9/GRC3 subfamily.

It is found in the nucleus. The protein localises to the nucleolus. In terms of biological role, polynucleotide 5'-kinase involved in rRNA processing. In Caenorhabditis elegans, this protein is Polynucleotide 5'-hydroxyl-kinase nol-9 (nol-9).